Reading from the N-terminus, the 93-residue chain is UPF0213 protein CPE1444 (93 aa).

Positions 1–75 (MNYVYILKCK…KKLTRNQKLQ (75 aa)) constitute a GIY-YIG domain.

It belongs to the UPF0213 family.

This chain is UPF0213 protein CPE1444, found in Clostridium perfringens (strain 13 / Type A).